The chain runs to 327 residues: MFNDIPVFDYEDIQLIPNKCIISSRSQADTSVKLGNYTFKLPVIPANMQTIIDEEVAETLACEGYFYIMHRFNEEERKPFIKRMHDKGLIASISVGVKDYEYDFVTSLKEDAPEFITIDIAHGHSNSVIEMIQHIKQELPETFVIAGNVGTPEAVRELENAGADATKVGIGPGKVCITKVKTGFGTGGWQLAALRWCSKAARKPIIADGGIRTHGDIAKSIRFGASMVMIGSLFAGHLESPGKLVEVDGQQFKEYYGSASEYQKGEHKNVEGKKILLPVKGRLEDTLTEMQQDLQSSISYAGGKELDSLRHVDYVIVKNSIWNGDSI.

Cys-176 serves as the catalytic Thioimidate intermediate. 205 to 228 lines the NADP(+) pocket; sequence IIADGGIRTHGDIAKSIRFGASMV.

Belongs to the IMPDH/GMPR family. GuaC type 2 subfamily.

The enzyme catalyses IMP + NH4(+) + NADP(+) = GMP + NADPH + 2 H(+). In terms of biological role, catalyzes the irreversible NADPH-dependent deamination of GMP to IMP. It functions in the conversion of nucleobase, nucleoside and nucleotide derivatives of G to A nucleotides, and in maintaining the intracellular balance of A and G nucleotides. The chain is GMP reductase from Streptococcus agalactiae serotype III (strain NEM316).